A 212-amino-acid polypeptide reads, in one-letter code: Ribonuclease HII (212 aa).

The RNase H type-2 domain maps to E12–I201. D18, E19, and D110 together coordinate a divalent metal cation.

Belongs to the RNase HII family. The cofactor is Mn(2+). Mg(2+) serves as cofactor.

Its subcellular location is the cytoplasm. It carries out the reaction Endonucleolytic cleavage to 5'-phosphomonoester.. In terms of biological role, endonuclease that specifically degrades the RNA of RNA-DNA hybrids. In Stutzerimonas stutzeri (strain A1501) (Pseudomonas stutzeri), this protein is Ribonuclease HII.